The primary structure comprises 412 residues: Short-chain specific acyl-CoA dehydrogenase, mitochondrial (412 aa).

The transit peptide at 1-24 directs the protein to the mitochondrion; that stretch reads MAAALLARAGGSLGRALRARDWRR. Thr-27 carries the post-translational modification Phosphothreonine. Position 51 is an N6-acetyllysine; alternate (Lys-51). Lys-51 is modified (N6-succinyllysine; alternate). At Lys-72 the chain carries N6-acetyllysine. The residue at position 129 (Lys-129) is an N6-acetyllysine; alternate. At Lys-129 the chain carries N6-succinyllysine; alternate. FAD-binding positions include 152-161 and 185-187; these read FALSEPGNGS and WIT. Position 161 (Ser-161) interacts with substrate. Position 208 is an N6-acetyllysine (Lys-208). Residue Lys-262 is modified to N6-acetyllysine; alternate. Lys-262 is subject to N6-succinyllysine; alternate. 269-272 is a binding site for substrate; the sequence is DMGR. At Lys-292 the chain carries N6-acetyllysine. Residue Arg-297 coordinates FAD. Position 306 is an N6-acetyllysine; alternate (Lys-306). An N6-succinyllysine; alternate modification is found at Lys-306. 365 to 369 contributes to the FAD binding site; sequence QILGG. The active-site Proton acceptor is the Glu-392. 394 to 396 is an FAD binding site; that stretch reads TSE.

The protein belongs to the acyl-CoA dehydrogenase family. As to quaternary structure, homotetramer. FAD is required as a cofactor.

It localises to the mitochondrion matrix. It carries out the reaction a short-chain 2,3-saturated fatty acyl-CoA + oxidized [electron-transfer flavoprotein] + H(+) = a short-chain (2E)-enoyl-CoA + reduced [electron-transfer flavoprotein]. It catalyses the reaction butanoyl-CoA + oxidized [electron-transfer flavoprotein] + H(+) = (2E)-butenoyl-CoA + reduced [electron-transfer flavoprotein]. The enzyme catalyses pentanoyl-CoA + oxidized [electron-transfer flavoprotein] + H(+) = (2E)-pentenoyl-CoA + reduced [electron-transfer flavoprotein]. The catalysed reaction is hexanoyl-CoA + oxidized [electron-transfer flavoprotein] + H(+) = (2E)-hexenoyl-CoA + reduced [electron-transfer flavoprotein]. Its pathway is lipid metabolism; mitochondrial fatty acid beta-oxidation. In terms of biological role, short-chain specific acyl-CoA dehydrogenase is one of the acyl-CoA dehydrogenases that catalyze the first step of mitochondrial fatty acid beta-oxidation, an aerobic process breaking down fatty acids into acetyl-CoA and allowing the production of energy from fats. The first step of fatty acid beta-oxidation consists in the removal of one hydrogen from C-2 and C-3 of the straight-chain fatty acyl-CoA thioester, resulting in the formation of trans-2-enoyl-CoA. Among the different mitochondrial acyl-CoA dehydrogenases, short-chain specific acyl-CoA dehydrogenase acts specifically on acyl-CoAs with saturated 4 to 6 carbons long primary chains. The chain is Short-chain specific acyl-CoA dehydrogenase, mitochondrial (Acads) from Rattus norvegicus (Rat).